Here is a 445-residue protein sequence, read N- to C-terminus: Sterile alpha motif domain-containing protein 7 (445 aa).

The tract at residues 98–172 (HAARAEMEMY…HLQGNPILLA (75 aa)) is required for localization to nuclear polycomb bodies. A disordered region spans residues 193-282 (YQKPPESDTE…WDDGKGKPSE (90 aa)). Residues 227-244 (IKDPDIEVDNQQKPRVAD) are compositionally biased toward basic and acidic residues. Residues 324–378 (WTVDDVYNFIRSLPGCSDYAQVFKDHAIDGETLPLLTEQHLRGTMGLKLGPALKI) enclose the SAM domain. The tract at residues 425–445 (SIPGPQDLLSPKRTEQDVMRN) is disordered. Over residues 434 to 445 (SPKRTEQDVMRN) the composition is skewed to basic and acidic residues.

As to quaternary structure, monomer, homodimer and homooligomer. Component of a Polycomb group (PcG) multiprotein PRC1-like complex. Interacts with PHC2 and NR2E3. Interacts with RNF1 in a PHC2-dependent manner. Interacts with SAMD11. Expressed in the retina and the pineal gland. In the retina, it is predominantly expressed in the outer nuclear layer and developing rod photoreceptors.

Its subcellular location is the nucleus. It is found in the cytoplasm. Its function is as follows. Component of a Polycomb group (PcG) multiprotein PRC1-like complex, essential for establishing rod photoreceptor cell identity and function by silencing nonrod gene expression in developing rod photoreceptor cells. Via its association with the PRC1-like complex, promotes epigenetic repressive marks H3K27me3 and H2AK119ub marks in nonrod genes, silencing their transcription. Represses Crx-controlled photoreceptor-specific gene expression. The chain is Sterile alpha motif domain-containing protein 7 (Samd7) from Mus musculus (Mouse).